A 1391-amino-acid chain; its full sequence is Eukaryotic translation initiation factor 3 subunit A (1391 aa).

Residues 315-498 (MQRMSTRVLL…RTLSFGSDLN (184 aa)) form the PCI domain. Composition is skewed to basic and acidic residues over residues 809-921 (DKEE…RGGP), 940-959 (AALR…EKVS), 966-1234 (EKGG…RDQT), 1246-1257 (GWREREKAREDS), 1265-1307 (QAPE…ETPR), and 1313-1380 (DSDR…IKPE). Residues 809–1391 (DKEEEEERLR…DEDGWTTVRR (583 aa)) are disordered. 2 consecutive repeat copies span residues 973–982 (DEDRGPKRGL) and 983–992 (EEDRGPRRGI). The tract at residues 973 to 1229 (DEDRGPKRGL…DDDRGPRRGE (257 aa)) is 26 X 10 AA approximate tandem repeats of [DE]-[DE]-[DE]-R-[GATV]-[PS]-[KRW]-R-G-[AEFGIL]. The 3; approximate repeat unit spans residues 993–1001 (DDAGPRRGF). Tandem repeats lie at residues 1002–1011 (EEDRGPRRGI), 1012–1021 (EDDRAPRRGF), 1022–1031 (DDDRGPRRGF), 1032–1041 (DDDRGPRRGF), 1042–1051 (DEDRGPRRGI), 1052–1061 (DDDRGPRRGF), 1062–1071 (DEDRTPRRGF), 1072–1081 (DDDRGPRRGF), 1082–1091 (DDDRGPRRGF), 1092–1101 (DEDRGPRRGF), 1102–1111 (EDDRGPRRGF), 1112–1120 (EDDRGPRRG), 1122–1131 (EDDRGPRRGF), 1132–1141 (EDDRGPRRGF), 1142–1151 (EDDRGPRRGF), 1152–1161 (DEDRGPRRGF), 1162–1171 (EDDRGPRRGF), 1172–1181 (DEDRTPRRGF), 1182–1191 (DDDRGPRRGL), and 1192–1201 (DEDRGSWRGG). One copy of the 24; approximate repeat lies at 1202–1209 (DDVPRRGA). 2 repeat units span residues 1210–1219 (DDDRGPRRGA) and 1220–1229 (DDDRGPRRGE).

It belongs to the eIF-3 subunit A family. As to quaternary structure, component of the eukaryotic translation initiation factor 3 (eIF-3) complex, which is composed of 13 subunits: eif3a, eif3b, eif3c, eif3d, eif3e, eif3f, eif3g, eif3h, eif3i, eif3j, eif3k, eif3l and eif3m.

Its subcellular location is the cytoplasm. RNA-binding component of the eukaryotic translation initiation factor 3 (eIF-3) complex, which is involved in protein synthesis of a specialized repertoire of mRNAs and, together with other initiation factors, stimulates binding of mRNA and methionyl-tRNAi to the 40S ribosome. The eIF-3 complex specifically targets and initiates translation of a subset of mRNAs involved in cell proliferation. The sequence is that of Eukaryotic translation initiation factor 3 subunit A (eif3a) from Xenopus tropicalis (Western clawed frog).